Here is a 278-residue protein sequence, read N- to C-terminus: 4-hydroxy-tetrahydrodipicolinate reductase (278 aa).

Residues G13 to M18 and G111 to T113 contribute to the NAD(+) site. H167 acts as the Proton donor/acceptor in catalysis. Residue H168 coordinates (S)-2,3,4,5-tetrahydrodipicolinate. K171 (proton donor) is an active-site residue. G177–T178 is a (S)-2,3,4,5-tetrahydrodipicolinate binding site.

The protein belongs to the DapB family.

It is found in the cytoplasm. It carries out the reaction (S)-2,3,4,5-tetrahydrodipicolinate + NAD(+) + H2O = (2S,4S)-4-hydroxy-2,3,4,5-tetrahydrodipicolinate + NADH + H(+). The enzyme catalyses (S)-2,3,4,5-tetrahydrodipicolinate + NADP(+) + H2O = (2S,4S)-4-hydroxy-2,3,4,5-tetrahydrodipicolinate + NADPH + H(+). It functions in the pathway amino-acid biosynthesis; L-lysine biosynthesis via DAP pathway; (S)-tetrahydrodipicolinate from L-aspartate: step 4/4. Catalyzes the conversion of 4-hydroxy-tetrahydrodipicolinate (HTPA) to tetrahydrodipicolinate. This chain is 4-hydroxy-tetrahydrodipicolinate reductase, found in Trichormus variabilis (strain ATCC 29413 / PCC 7937) (Anabaena variabilis).